Here is a 188-residue protein sequence, read N- to C-terminus: Elongation factor P-like protein (188 aa).

The protein belongs to the elongation factor P family.

This is Elongation factor P-like protein from Xanthomonas axonopodis pv. citri (strain 306).